The primary structure comprises 336 residues: Palmitoyltransferase SWF1 (336 aa).

Residues 1-2 (MS) are Lumenal-facing. A helical transmembrane segment spans residues 3–23 (WNLLFVLLIGFVVLILLSPVF). The Cytoplasmic segment spans residues 24 to 50 (KSTWPFSTFYRNVFQPFLVDDQKYRWK). The chain crosses the membrane as a helical span at residues 51-71 (LHLVPLFYTSIYLYLVYTYHM). Residues 72–86 (RVESTIKNELFLLER) are Lumenal-facing. A helical membrane pass occupies residues 87–107 (ILIVPIIILPPVALGILAMVS). The Cytoplasmic segment spans residues 108–179 (RAEDSKDHKS…CIGKGNYLQF (72 aa)). Positions 134-184 (IKCSTCRIVKPARSKHCSICNRCVLVADHHCIWINNCIGKGNYLQFYLFLI) constitute a DHHC domain. The helical transmembrane segment at 180 to 200 (YLFLISNIFSMCYAFLRLWYI) threads the bilayer. Residues 201–216 (SLNSTSTLPRAVLTLT) are Lumenal-facing. A helical membrane pass occupies residues 217–237 (ILCGCFTIICAIFTYLQLAIV). The Cytoplasmic portion of the chain corresponds to 238-336 (KEGMTTNEQD…TFLANLTDLI (99 aa)).

It belongs to the DHHC palmitoyltransferase family. SWF1 subfamily.

Its subcellular location is the endoplasmic reticulum membrane. The catalysed reaction is L-cysteinyl-[protein] + hexadecanoyl-CoA = S-hexadecanoyl-L-cysteinyl-[protein] + CoA. In terms of biological role, palmitoyltransferase that targets several endosomal SNAREs. Palmitoylates the SNAREs SNC1, SNC2, SYN8 and TLG1, at cysteine residues close to the cytoplasmic end of their transmembrane domain. May have a role in the cellular quality control of transmembrane domain-containing proteins. In Saccharomyces cerevisiae (strain ATCC 204508 / S288c) (Baker's yeast), this protein is Palmitoyltransferase SWF1 (SWF1).